Reading from the N-terminus, the 72-residue chain is Conotoxin Ep11.1 (72 aa).

Positions 1–19 (MKLCVTFLLILVILPSVTG) are cleaved as a signal peptide. The propeptide occupies 20–32 (EKSSKRTLSGAAL). Cystine bridges form between cysteine 39–cysteine 53, cysteine 46–cysteine 58, cysteine 52–cysteine 63, and cysteine 57–cysteine 70.

This sequence belongs to the conotoxin I1 superfamily. As to expression, expressed by the venom duct.

Its subcellular location is the secreted. The chain is Conotoxin Ep11.1 from Conus episcopatus (Bishop's cone).